A 461-amino-acid chain; its full sequence is Cysteine--tRNA ligase (461 aa).

Cys31 contacts Zn(2+). A 'HIGH' region motif is present at residues Pro33 to Asn43. 3 residues coordinate Zn(2+): Cys219, His244, and Glu248. A 'KMSKS' region motif is present at residues Lys277 to Ser281. Lys280 is an ATP binding site. Basic and acidic residues predominate over residues Ser436–Glu452. Residues Ser436–Arg461 form a disordered region.

The protein belongs to the class-I aminoacyl-tRNA synthetase family. As to quaternary structure, monomer. It depends on Zn(2+) as a cofactor.

Its subcellular location is the cytoplasm. It catalyses the reaction tRNA(Cys) + L-cysteine + ATP = L-cysteinyl-tRNA(Cys) + AMP + diphosphate. This is Cysteine--tRNA ligase from Agrobacterium fabrum (strain C58 / ATCC 33970) (Agrobacterium tumefaciens (strain C58)).